The chain runs to 163 residues: Nucleotide-binding protein CYB_0891 (163 aa).

This sequence belongs to the YajQ family.

In terms of biological role, nucleotide-binding protein. The polypeptide is Nucleotide-binding protein CYB_0891 (Synechococcus sp. (strain JA-2-3B'a(2-13)) (Cyanobacteria bacterium Yellowstone B-Prime)).